The chain runs to 249 residues: ATP synthase subunit a (249 aa).

5 helical membrane-spanning segments follow: residues 33 to 53, 92 to 112, 131 to 151, 196 to 216, and 217 to 237; these read GQVFLTSWFVIAALVVLSLLA, VPFIGTLFLFIFLSNWSGALI, INTTVALALLTSLAYFYAGFS, LVVAVLVLLVPLFVPLPAMIL, and GLFTSAIQALIFATLAASYIG.

This sequence belongs to the ATPase A chain family. In terms of assembly, F-type ATPases have 2 components, CF(1) - the catalytic core - and CF(0) - the membrane proton channel. CF(1) has five subunits: alpha(3), beta(3), gamma(1), delta(1), epsilon(1). CF(0) has four main subunits: a, b, b' and c.

The protein resides in the cellular thylakoid membrane. In terms of biological role, key component of the proton channel; it plays a direct role in the translocation of protons across the membrane. In Synechococcus elongatus (strain ATCC 33912 / PCC 7942 / FACHB-805) (Anacystis nidulans R2), this protein is ATP synthase subunit a.